Reading from the N-terminus, the 408-residue chain is Protein EcsB (408 aa).

9 helical membrane passes run 30–50 (HLVI…SKWI), 53–73 (IPAH…VLTS), 111–131 (LFPL…VTPG), 134–154 (LVSY…NQVM), 180–200 (LVLY…YVIM), 284–304 (YLGI…YVSA), 308–328 (IAAV…LPLF), 351–371 (YFSL…VASA), and 374–394 (AGLT…FVVL).

Its subcellular location is the cell membrane. In terms of biological role, presumed to form part of an ABC-transporter, it may form a transport channel. The chain is Protein EcsB (ecsB) from Bacillus subtilis (strain 168).